The chain runs to 348 residues: Myricetin O-methyltransferase (348 aa).

N-acetylmethionine is present on M1. The S-adenosyl-L-methionine site is built by G189, D212, D232, M233, and K246. The active-site Proton acceptor is H250.

In terms of processing, the N-terminus is blocked.

It catalyses the reaction S-adenosyl-L-methionine + a 3'-hydroxyflavonoid = S-adenosyl-L-homocysteine + a 3'-methoxyflavonoid.. The enzyme catalyses S-adenosyl-L-methionine + a 5'-hydroxy-3'-methoxyflavonoid = S-adenosyl-L-homocysteine + a 3',5'-dimethoxyflavonoid.. Methylates myricetin and dihydromyricetin at 2 sites. Inactive towards 16-hydroxytabersonine, the phenylpropanoids 5-hydroxyferulate, caffeate and their CoA-esters, flavones and flavanones possessing 2 or 3 B-ring hydroxyl groups. The sequence is that of Myricetin O-methyltransferase from Catharanthus roseus (Madagascar periwinkle).